The following is a 182-amino-acid chain: MQTEHVILLNAQGVPTGTLEKYAAHTADTLLHLAFSSWLFNAKGQLLVTRRALSKKAWPGVWTNSVCGHPQLGESNEEAVIRRCRYELGVEITPPESIYPDFRYRATDPNGIVENEVCPVFAARTTSALQINDDEVMDYQWCDLADVLRGIDATPWAFSPWMVMQATNREARKRLSAFTQLK.

Positions 25 and 32 each coordinate Mn(2+). Residues 30–164 (LLHLAFSSWL…PWAFSPWMVM (135 aa)) form the Nudix hydrolase domain. Cysteine 67 is a catalytic residue. Residue cysteine 67 participates in Mg(2+) binding. Mn(2+) is bound at residue histidine 69. Glutamate 87 provides a ligand contact to Mg(2+). 2 residues coordinate Mn(2+): glutamate 114 and glutamate 116. Residue glutamate 116 is part of the active site.

Belongs to the IPP isomerase type 1 family. As to quaternary structure, homodimer. Mg(2+) serves as cofactor. Mn(2+) is required as a cofactor.

It is found in the cytoplasm. It catalyses the reaction isopentenyl diphosphate = dimethylallyl diphosphate. The protein operates within isoprenoid biosynthesis; dimethylallyl diphosphate biosynthesis; dimethylallyl diphosphate from isopentenyl diphosphate: step 1/1. Catalyzes the 1,3-allylic rearrangement of the homoallylic substrate isopentenyl (IPP) to its highly electrophilic allylic isomer, dimethylallyl diphosphate (DMAPP). This Escherichia coli O6:H1 (strain CFT073 / ATCC 700928 / UPEC) protein is Isopentenyl-diphosphate Delta-isomerase.